The chain runs to 205 residues: MYHFVYETTNLINGKKYIGKHSTDDLNDGYLGSGKAIQQAIKKYGENNFSRTILKEFKTSEEAYMYEEEIITPELIKSKNYYNMKPGGIGGIVMTTDVIAKMKESSAKRFENSPGTVLGKTCYTNGTKNIFIKPGELVPEGFVKGMVHPNRKSRKGCKVKPTTTGTFWVNNGAINKLIQPDGIIPDGFIKGRLMKRDSKGKFSKA.

Residues 1–84 enclose the GIY-YIG domain; sequence MYHFVYETTN…LIKSKNYYNM (84 aa).

This sequence to endonucleases of group I introns of fungi and phage. It depends on Mg(2+) as a cofactor.

In terms of biological role, probably involved in the movement of the endonuclease-encoding DNA. This Escherichia coli (Bacteriophage T4) protein is Putative endonuclease segE (segE).